The sequence spans 460 residues: Putative RNA-guided DNA endonuclease MT2953 (460 aa).

Catalysis depends on residues Asp224 and Glu313. Zn(2+) is bound by residues Cys372, Cys375, Cys389, and Cys392. Asp399 is an active-site residue. The disordered stretch occupies residues 415–460 (VVGPVGAAVKRGADRKTGPGPAGGREARKATGHPAGEQPRDGVQVK).

It in the N-terminal section; belongs to the transposase 2 family. The protein in the C-terminal section; belongs to the transposase 35 family.

Functionally, an RNA-guided dsDNA endonuclease. When guided by an RNA derived from the right-end element of its insertion sequence element (IS), cleaves DNA downstream of the transposon-associated motif (TAM). Cleaves supercoiled and linear DNA in a staggered manner 15-21 bases from the TAM yielding 5'-overhangs. Binds reRNA, an approximately 150 nucleotide base sRNA derived from the 3' end of its own gene, the right end (RE) of the insertion sequence (IS) plus sequence downstream of the IS. This Mycobacterium tuberculosis (strain CDC 1551 / Oshkosh) protein is Putative RNA-guided DNA endonuclease MT2953.